The chain runs to 141 residues: Large ribosomal subunit protein uL11 (141 aa).

This sequence belongs to the universal ribosomal protein uL11 family. In terms of assembly, part of the ribosomal stalk of the 50S ribosomal subunit. Interacts with L10 and the large rRNA to form the base of the stalk. L10 forms an elongated spine to which L12 dimers bind in a sequential fashion forming a multimeric L10(L12)X complex. One or more lysine residues are methylated.

Its function is as follows. Forms part of the ribosomal stalk which helps the ribosome interact with GTP-bound translation factors. In Synechococcus sp. (strain JA-3-3Ab) (Cyanobacteria bacterium Yellowstone A-Prime), this protein is Large ribosomal subunit protein uL11.